The chain runs to 355 residues: Guanine nucleotide-binding protein G(i) subunit alpha-2 (355 aa).

A lipid anchor (N-myristoyl glycine) is attached at glycine 2. The S-palmitoyl cysteine moiety is linked to residue cysteine 3. The G-alpha domain occupies 32–355 (REVKLLLLGA…KNNLKDCGLF (324 aa)). Residues 35 to 48 (KLLLLGAGESGKST) form a G1 motif region. Residues 40-47 (GAGESGKS), 176-182 (LRTRVKT), 201-205 (DVGGQ), 270-273 (NKKD), and alanine 327 contribute to the GTP site. Mg(2+) contacts are provided by serine 47 and threonine 182. The interval 174–182 (DVLRTRVKT) is G2 motif. The interval 197 to 206 (FKMFDVGGQR) is G3 motif. The segment at 266–273 (ILFLNKKD) is G4 motif. Residues 325 to 330 (TCATDT) are G5 motif.

This sequence belongs to the G-alpha family. G(i/o/t/z) subfamily. G proteins are composed of 3 units; alpha, beta and gamma. The alpha chain contains the guanine nucleotide binding site. In this context, interacts with GNB2. Interacts with UNC5B. Interacts with GPSM1. Interacts with RGS12 and RGS14. Interacts (inactive GDP-bound form) with NUCB1 (via GBA motif); the interaction leads to activation of GNAI3. Interacts (inactive GDP-bound form) with CCDC88C/DAPLE (via GBA motif). Interacts (inactive GDP-bound form) with CCDC8A/GIV (via GBA motif).

The protein localises to the cytoplasm. Its subcellular location is the cell membrane. The protein resides in the cytoskeleton. It is found in the microtubule organizing center. It localises to the centrosome. The protein localises to the membrane. Functionally, guanine nucleotide-binding proteins (G proteins) are involved as modulators or transducers in various transmembrane signaling systems. The G(i) proteins are involved in hormonal regulation of adenylate cyclase: they inhibit the cyclase in response to beta-adrenergic stimuli. May play a role in cell division. The polypeptide is Guanine nucleotide-binding protein G(i) subunit alpha-2 (Gnai2) (Rattus norvegicus (Rat)).